Here is a 741-residue protein sequence, read N- to C-terminus: Transketolase-1, chloroplastic (741 aa).

The N-terminal 66 residues, 1-66, are a transit peptide targeting the chloroplast; that stretch reads MASTSSLALS…NRSLRPLVRA (66 aa). The segment at 22–51 is disordered; sequence GSDQRGSLPAFSGLKSTGSRASASSRRRIA. An N-acetylalanine modification is found at alanine 67. Histidine 103 contributes to the substrate binding site. Thiamine diphosphate-binding positions include histidine 143 and 192–194; that span reads GPL. Aspartate 233 contributes to the Mg(2+) binding site. Thiamine diphosphate contacts are provided by glycine 234 and asparagine 263. The Mg(2+) site is built by asparagine 263 and isoleucine 265. Histidine 340 is a binding site for substrate. Histidine 340 lines the thiamine diphosphate pocket. Residue serine 428 is modified to Phosphoserine. 2 residues coordinate substrate: arginine 434 and serine 461. Thiamine diphosphate is bound by residues glutamate 488 and phenylalanine 515. Catalysis depends on glutamate 488, which acts as the Proton donor. Substrate contacts are provided by histidine 539, aspartate 547, and arginine 598.

It belongs to the transketolase family. Homodimer. Mg(2+) is required as a cofactor. The cofactor is Ca(2+). It depends on Mn(2+) as a cofactor. Requires Co(2+) as cofactor. Thiamine diphosphate serves as cofactor.

The protein localises to the plastid. It is found in the chloroplast stroma. The catalysed reaction is D-sedoheptulose 7-phosphate + D-glyceraldehyde 3-phosphate = aldehydo-D-ribose 5-phosphate + D-xylulose 5-phosphate. The protein operates within carbohydrate biosynthesis; Calvin cycle. Functionally, catalyzes the reversible transfer of a two-carbon ketol group from fructose-6-phosphate or sedoheptulose-7-phosphate to glyceraldehyde-3-phosphate to yield xylulose-5-phosphate and erythrose-4-phosphate or ribose-5-phosphate, respectively. Could act as a stress sensor involved in adaptation process. The sequence is that of Transketolase-1, chloroplastic (TKL-1) from Arabidopsis thaliana (Mouse-ear cress).